Reading from the N-terminus, the 562-residue chain is MLNFLPGNPQDLKPKITVIGVGGAGGNAVNNMIASRLEGVEFIVANTDAQAINQSRTERRVQLGTTVAQGLGAGSRPEIGRAAAEESLEEVIGQIAGANMVFITAGMGGGTGSGAAPVIARAARDHGILTVGVVTKPFHFEGAHRMRTAEGAIEELSQYVDTLIIIPNQNLFRVATERTTFADAFKMADDVLYSGVRGVTDLMIMPGLINLDFADIRTVMSEMGKAMMGTGEAEGDKRAIEAAEAAISNPLLDDTSMKGAKGVLINITGGMDMTLFEVDEAANRIRDEVDPEANIIFGSTFDEKLNGKMRVSVVATGIASEAAAQPKPTVVSLNTPQAQPQPRVAAGGTAGAGFRPAVVTAQAAPAAAVAVAQAQPQMEARTVAQPAPQPAHQPVVTAQVRVQPAAARPAQQPMAETFRPDPQLRLDPVLERPVPATTSLQADFRADPDMGHLSQAVSHIAETAQAAPQPQRQPEIQRQQAPQPQRQPEPEARRSGGLFGLLRRPAAAQPAPQPQRHEPAPMAQQPRQEPARMGNMATRSEPSVARAGEDLDIPAFLRRQAN.

Residues 23–27, 110–112, Glu141, Arg145, and Asp189 each bind GTP; these read GAGGN and GTG. Positions 404–413 are enriched in low complexity; it reads PAAARPAQQP. 2 disordered regions span residues 404–428 and 462–562; these read PAAARPAQQPMAETFRPDPQLRLDP and ETAQ…RQAN. Over residues 418 to 428 the composition is skewed to basic and acidic residues; sequence FRPDPQLRLDP. Composition is skewed to low complexity over residues 464–486 and 500–510; these read AQAAPQPQRQPEIQRQQAPQPQR and GLLRRPAAAQP.

This sequence belongs to the FtsZ family. As to quaternary structure, homodimer. Polymerizes to form a dynamic ring structure in a strictly GTP-dependent manner. Interacts directly with several other division proteins. Interacts with FtsZ-like protein (also called FtsZm).

It is found in the cytoplasm. Functionally, essential cell division protein that forms a contractile ring structure (Z ring) at the future cell division site. The regulation of the ring assembly controls the timing and the location of cell division. One of the functions of the FtsZ ring is to recruit other cell division proteins to the septum to produce a new cell wall between the dividing cells. Binds GTP and shows GTPase activity. Mild overexpression impairs cell division, leading to very elongated cells. Isolated protein forms filaments and bundles in the presence of GTP. The polypeptide is Cell division protein FtsZ (Magnetospirillum gryphiswaldense (strain DSM 6361 / JCM 21280 / NBRC 15271 / MSR-1)).